Reading from the N-terminus, the 262-residue chain is Transcription factor Adf-1 (262 aa).

The MADF DNA-binding region spans 24–104; sequence NLIEAVKLNP…QMQFLVDSIR (81 aa). Residues 217–256 form the BESS domain; the sequence is SAEDQSFGMVVTDMLNTLGVRQKAEAKVHIIKYLTDMQLL.

In terms of processing, O-glycosylated; contains N-acetylglucosamine side chains.

The protein localises to the nucleus. In terms of biological role, may play an important role not only in the regulation of Adh expression but also in the transcription of other genes. The sequence is that of Transcription factor Adf-1 (Adf1) from Drosophila melanogaster (Fruit fly).